Here is an 86-residue protein sequence, read N- to C-terminus: Beta-toxin To4 (86 aa).

Residues 1–20 (MTRFVLFISCFFLIGMIVEC) form the signal peptide. One can recognise an LCN-type CS-alpha/beta domain in the interval 21–83 (KDGYLMEYGG…IWNRATNKCG (63 aa)). 4 disulfide bridges follow: cysteine 31/cysteine 82, cysteine 35/cysteine 57, cysteine 43/cysteine 63, and cysteine 47/cysteine 65. Cysteine 82 carries the cysteine amide modification.

It belongs to the long (4 C-C) scorpion toxin superfamily. Sodium channel inhibitor family. Beta subfamily. As to expression, expressed by the venom gland.

The protein localises to the secreted. In terms of biological role, beta toxins bind voltage-independently at site-4 of sodium channels (Nav) and shift the voltage of activation toward more negative potentials thereby affecting sodium channel activation and promoting spontaneous and repetitive firing. This toxin shows moderate inhibition of Nav1.1/SCN1A, Nav1.2/SCN2A, and Nav1.4/SCN4A, and promotes a left voltage shift on these channels. It exhibits similar potency on Nav1.2/SCN2A and Nav1.4/SCN4A (40-50% peak current inhibition at 0.5 uM), and weaker inhibition on Nav1.2 (20-30% peak current inhibition at 0.5 uM). In Tityus obscurus (Amazonian scorpion), this protein is Beta-toxin To4.